Reading from the N-terminus, the 351-residue chain is UDP-3-O-acylglucosamine N-acyltransferase (351 aa).

H240 functions as the Proton acceptor in the catalytic mechanism.

The protein belongs to the transferase hexapeptide repeat family. LpxD subfamily. Homotrimer.

The catalysed reaction is a UDP-3-O-[(3R)-3-hydroxyacyl]-alpha-D-glucosamine + a (3R)-hydroxyacyl-[ACP] = a UDP-2-N,3-O-bis[(3R)-3-hydroxyacyl]-alpha-D-glucosamine + holo-[ACP] + H(+). It functions in the pathway bacterial outer membrane biogenesis; LPS lipid A biosynthesis. Catalyzes the N-acylation of UDP-3-O-acylglucosamine using 3-hydroxyacyl-ACP as the acyl donor. Is involved in the biosynthesis of lipid A, a phosphorylated glycolipid that anchors the lipopolysaccharide to the outer membrane of the cell. The sequence is that of UDP-3-O-acylglucosamine N-acyltransferase from Pseudomonas syringae pv. syringae (strain B728a).